The sequence spans 531 residues: MRLQFKLLGFLTLLGTSTILSACAATQPNFEPNNIEESGPITPTTPTTDVPKPTAEVVPVNRGFHFQTNKVPSESDVFKHNYDLTFSLNFTNKSNDIYGTGWLFDWKGDEKALGIDGSFVPSITSNIDNSLLKDDQFTVYLATNLHVADALRNDQDYEPYKKDQNKQDFTENTKTEFFSLGKYLEGEQLKQYISKEENQSANQTDKALVSIQASNIPKTAYTATDFVDMNSYSYNNITTSLPGNYADFAVIEVNLNLKNQRDQQILHDFVKPAIKAYKALGDTLELFSAKPLNQFIEQNYYLLGYPVINKGNNTANLLLAQQKSFDHNNSDHNQKSQWFTKDQSYINKLDRIPVLTNNYRAYNESTGSQLFANQQNESWLNGVVIQDKGVVNFASFSNFTLKYHEKRFQQYGYGLMLNDTNFPGGSSGSPLIGKDNKLNSIYFGVLEIYQSGSLARNDIGMSQILRTPQNDKGSSISKGSYDLIFGDKNTKNYYAKFAKDHQTHLYQKIKESKDEQFRFVETQETTNNLGN.

Positions 1–22 (MRLQFKLLGFLTLLGTSTILSA) are cleaved as a signal peptide. C23 carries N-palmitoyl cysteine lipidation. C23 is lipidated: S-diacylglycerol cysteine. A disordered region spans residues 31-51 (EPNNIEESGPITPTTPTTDVP). Positions 40–51 (PITPTTPTTDVP) are enriched in low complexity.

The protein belongs to the MG067/MG068/MG395 family.

It localises to the cell membrane. This is an uncharacterized protein from Mycoplasma pneumoniae (strain ATCC 29342 / M129 / Subtype 1) (Mycoplasmoides pneumoniae).